Here is a 461-residue protein sequence, read N- to C-terminus: Argininosuccinate lyase (461 aa).

Belongs to the lyase 1 family. Argininosuccinate lyase subfamily.

It is found in the cytoplasm. It catalyses the reaction 2-(N(omega)-L-arginino)succinate = fumarate + L-arginine. It functions in the pathway amino-acid biosynthesis; L-arginine biosynthesis; L-arginine from L-ornithine and carbamoyl phosphate: step 3/3. This chain is Argininosuccinate lyase, found in Clostridium beijerinckii (strain ATCC 51743 / NCIMB 8052) (Clostridium acetobutylicum).